The primary structure comprises 306 residues: tRNA dimethylallyltransferase (306 aa).

Residue 9-16 (GPTAIGKT) coordinates ATP. 11-16 (TAIGKT) lines the substrate pocket. The interval 34–37 (DSMQ) is interaction with substrate tRNA.

Belongs to the IPP transferase family. Monomer. Mg(2+) is required as a cofactor.

It carries out the reaction adenosine(37) in tRNA + dimethylallyl diphosphate = N(6)-dimethylallyladenosine(37) in tRNA + diphosphate. Functionally, catalyzes the transfer of a dimethylallyl group onto the adenine at position 37 in tRNAs that read codons beginning with uridine, leading to the formation of N6-(dimethylallyl)adenosine (i(6)A). This Lactobacillus helveticus (strain DPC 4571) protein is tRNA dimethylallyltransferase.